Reading from the N-terminus, the 567-residue chain is Signal transducer and activator of transcription b (567 aa).

The region spanning 449 to 548 is the SH2 domain; sequence WYDGLVYGFC…LGGRNKPRIR (100 aa).

The protein belongs to the transcription factor STAT family. May interact with sodium-dependent transporter snf-12; the interaction is probably direct.

The protein localises to the cytoplasm. Its subcellular location is the nucleus. The protein resides in the vesicle. Functionally, carries out a dual function: signal transduction and activation of transcription. Required, in concert with transcription factor elt-3, for up-regulation of the vacuolar H(+)-ATPase and acceleration of lysosome maturation at molt. As part of the innate immune response to molting and injury of the adult epidermis, positively regulates the expression of epidermal antimicrobial peptides, such as nlp-29. Through positively modulating the expression of epidermal antimicrobial peptides, such as nlp-29, plays a role in resistance to fungal infection and in the response to physical wounding and phorbol ester PMA treatment. Functions cell autonomously in the epidermis, in concert with sodium-dependent transporter snf-12, probably acting at vesicular membranes, downstream of a p38 MAPK/pmk-1 pathway. In Caenorhabditis elegans, this protein is Signal transducer and activator of transcription b.